The primary structure comprises 30 residues: V-type proton ATPase catalytic subunit A isoform 2 (30 aa).

This sequence belongs to the ATPase alpha/beta chains family. As to quaternary structure, V-ATPase is a heteromultimeric enzyme composed of a peripheral catalytic V1 complex (main components: subunits A, B, C, D, E, and F) attached to an integral membrane V0 proton pore complex (main component: the proteolipid protein).

It carries out the reaction ATP + H2O + 4 H(+)(in) = ADP + phosphate + 5 H(+)(out). Its function is as follows. Catalytic subunit of the peripheral V1 complex of vacuolar ATPase. V-ATPase vacuolar ATPase is responsible for acidifying a variety of intracellular compartments in eukaryotic cells. This chain is V-type proton ATPase catalytic subunit A isoform 2, found in Equisetum arvense (Field horsetail).